The chain runs to 382 residues: Galactokinase (382 aa).

34–37 (EHTD) lines the substrate pocket. 124-130 (GAGLSSS) contacts ATP. Mg(2+)-binding residues include S130 and E162. The active-site Proton acceptor is the D174. Y223 serves as a coordination point for substrate.

This sequence belongs to the GHMP kinase family. GalK subfamily.

Its subcellular location is the cytoplasm. It carries out the reaction alpha-D-galactose + ATP = alpha-D-galactose 1-phosphate + ADP + H(+). Its pathway is carbohydrate metabolism; galactose metabolism. Its function is as follows. Catalyzes the transfer of the gamma-phosphate of ATP to D-galactose to form alpha-D-galactose-1-phosphate (Gal-1-P). This Shigella dysenteriae serotype 1 (strain Sd197) protein is Galactokinase.